The primary structure comprises 139 residues: Plastocyanin (139 aa).

The first 34 residues, 1-34 (MKLIAASLRRLSLAVLTVLLVVSSFAVFTPSAAA), serve as a signal peptide directing secretion. In terms of domain architecture, Plastocyanin-like spans 35–135 (ETYTVKLGSD…HRGAGMVGKI (101 aa)). Positions 73, 123, 126, and 131 each coordinate Cu cation.

The protein belongs to the plastocyanin family. Cu(2+) is required as a cofactor.

Its subcellular location is the cellular thylakoid membrane. Functionally, participates in electron transfer between P700 and the cytochrome b6-f complex in photosystem I. This chain is Plastocyanin (petE), found in Trichormus variabilis (strain ATCC 29413 / PCC 7937) (Anabaena variabilis).